We begin with the raw amino-acid sequence, 296 residues long: Magnetosome protein MamB (296 aa).

The Cytoplasmic segment spans residues 1–12 (MKFENCRDCREE). The tract at residues 1-214 (MKFENCRDCR…GLMDSSVDTE (214 aa)) is transmembrane domain (TMD). Residues 13-33 (VVWWAFTADICMTLFKGVLGL) traverse the membrane as a helical segment. At 34–83 (MSGSVALVADSLHSGADVVASGVTQLSLKISNKPADERYPFGYGNIQYIS) the chain is on the lumenal side. Residues 84-104 (SSIVGSLLLIGASFLMYGSVM) traverse the membrane as a helical segment. At 105-112 (KLISGTYE) the chain is on the cytoplasmic side. A helical transmembrane segment spans residues 113–133 (APSIFAAVGASVTVIVNELMY). At 134 to 164 (RYQICVGNENNSPAIIANAWDNRSDAISSAA) the chain is on the lumenal side. A helical transmembrane segment spans residues 165–185 (VMVGVIASVIGFPIADTIAAI). The Cytoplasmic segment spans residues 186-296 (GVSALVGRIG…SPAPAAAARA (111 aa)). Positions 215-296 (LLQTAWQVAM…SPAPAAAARA (82 aa)) are C-terminal domain (CTD).

This sequence belongs to the cation diffusion facilitator (CDF) transporter (TC 2.A.4) family. In terms of assembly, forms heterodimers with MamM. Probably interacts with MamE.

The protein localises to the magnetosome membrane. In terms of biological role, plays a dual, essential role in magnetosome formation; required for magnetosome vesicle formation as well as biomineralization. Probably binds and transports iron. Requires heterodimerization with MamM for stability. This is Magnetosome protein MamB (mamB) from Paramagnetospirillum magneticum (strain ATCC 700264 / AMB-1) (Magnetospirillum magneticum).